Consider the following 1894-residue polypeptide: Plexin-A4 (1894 aa).

The signal sequence occupies residues 1 to 23; that stretch reads MKAMPWNWTCLLSHLLMVGMGSS. One can recognise a Sema domain in the interval 24–507; the sequence is TLLTRQPAPL…SERQLTRVPV (484 aa). Topologically, residues 24–1237 are extracellular; it reads TLLTRQPAPL…IAPDSPLSLP (1214 aa). Disulfide bonds link Cys-95–Cys-104, Cys-130–Cys-138, Cys-284–Cys-405, Cys-300–Cys-356, Cys-374–Cys-393, Cys-510–Cys-527, Cys-516–Cys-558, Cys-519–Cys-536, Cys-530–Cys-542, and Cys-593–Cys-612. A PSI 1 domain is found at 509 to 559; that stretch reads SCGQYQSCGECLGSGDPHCGWCVLHNTCTRKERCERSKEPRRFASEMKQCV. Asn-655 carries N-linked (GlcNAc...) asparagine glycosylation. PSI domains follow at residues 655–702 and 803–856; these read NCSV…EDCP and KCGA…SKCT. 4 IPT/TIG domains span residues 858–952, 954–1037, 1040–1139, and 1142–1230; these read PRIT…YYFM, LTLS…FQYV, PTIV…FTYY, and PVFE…YIAP. 3 N-linked (GlcNAc...) asparagine glycosylation sites follow: Asn-1007, Asn-1132, and Asn-1180. A helical transmembrane segment spans residues 1238–1258; sequence AIVSIAVAGGLLIIFIVAVLI. Residues 1259-1894 lie on the Cytoplasmic side of the membrane; it reads AYKRKSRESD…QVITLMSLDS (636 aa). N6-acetyllysine is present on Lys-1350.

This sequence belongs to the plexin family. As to quaternary structure, interacts with NRP1 and NRP2.

It is found in the cell membrane. Functionally, coreceptor for SEMA3A. Necessary for signaling by class 3 semaphorins and subsequent remodeling of the cytoskeleton. Plays a role in axon guidance in the developing nervous system. Class 3 semaphorins bind to a complex composed of a neuropilin and a plexin. The plexin modulates the affinity of the complex for specific semaphorins, and its cytoplasmic domain is required for the activation of down-stream signaling events in the cytoplasm. The sequence is that of Plexin-A4 (PLXNA4) from Homo sapiens (Human).